The following is a 401-amino-acid chain: Pectate lyase (401 aa).

The N-terminal stretch at 1–20 is a signal peptide; the sequence is MATTILPLILFISSLAIASS. Asparagine 38 is a glycosylation site (N-linked (GlcNAc...) asparagine). Ca(2+)-binding residues include aspartate 199, aspartate 223, and aspartate 227. Arginine 279 is a catalytic residue.

This sequence belongs to the polysaccharide lyase 1 family. It depends on Ca(2+) as a cofactor. Expressed in sites of vascular differentiation and in new primordia on the flank of the shoot meristem.

It catalyses the reaction Eliminative cleavage of (1-&gt;4)-alpha-D-galacturonan to give oligosaccharides with 4-deoxy-alpha-D-galact-4-enuronosyl groups at their non-reducing ends.. The protein operates within glycan metabolism; pectin degradation; 2-dehydro-3-deoxy-D-gluconate from pectin: step 2/5. In terms of biological role, involved in the degradation of pectin. May assist in the removal and modification of an existing pectin matrix in order to allow the deposition of newly synthesized walls polymers for a specialized function or to create an architecture that is extensible. The chain is Pectate lyase from Zinnia elegans (Garden zinnia).